The sequence spans 67 residues: UPF0337 protein SP_1805 (67 aa).

A disordered region spans residues 1 to 30; sequence MSVEEKLNQAKGSIKEGVGKAIGDEKMEKE.

The protein belongs to the UPF0337 (CsbD) family.

The polypeptide is UPF0337 protein SP_1805 (Streptococcus pneumoniae serotype 4 (strain ATCC BAA-334 / TIGR4)).